We begin with the raw amino-acid sequence, 236 residues long: 1-(5-phosphoribosyl)-5-[(5-phosphoribosylamino)methylideneamino] imidazole-4-carboxamide isomerase (236 aa).

The active-site Proton acceptor is the aspartate 8. The active-site Proton donor is aspartate 129.

This sequence belongs to the HisA/HisF family.

The protein resides in the cytoplasm. It catalyses the reaction 1-(5-phospho-beta-D-ribosyl)-5-[(5-phospho-beta-D-ribosylamino)methylideneamino]imidazole-4-carboxamide = 5-[(5-phospho-1-deoxy-D-ribulos-1-ylimino)methylamino]-1-(5-phospho-beta-D-ribosyl)imidazole-4-carboxamide. The protein operates within amino-acid biosynthesis; L-histidine biosynthesis; L-histidine from 5-phospho-alpha-D-ribose 1-diphosphate: step 4/9. The polypeptide is 1-(5-phosphoribosyl)-5-[(5-phosphoribosylamino)methylideneamino] imidazole-4-carboxamide isomerase (Methanosphaerula palustris (strain ATCC BAA-1556 / DSM 19958 / E1-9c)).